Here is a 689-residue protein sequence, read N- to C-terminus: DNA ligase (689 aa).

NAD(+) contacts are provided by residues 40–44, 89–90, and glutamate 121; these read DAEYD and SL. The active-site N6-AMP-lysine intermediate is the lysine 123. Residues arginine 144, glutamate 179, lysine 295, and lysine 319 each contribute to the NAD(+) site. 4 residues coordinate Zn(2+): cysteine 413, cysteine 416, cysteine 431, and cysteine 437. A BRCT domain is found at 610 to 689; it reads REQSSLTGKI…AEWLTLVRDI (80 aa).

This sequence belongs to the NAD-dependent DNA ligase family. LigA subfamily. Requires Mg(2+) as cofactor. It depends on Mn(2+) as a cofactor.

It catalyses the reaction NAD(+) + (deoxyribonucleotide)n-3'-hydroxyl + 5'-phospho-(deoxyribonucleotide)m = (deoxyribonucleotide)n+m + AMP + beta-nicotinamide D-nucleotide.. In terms of biological role, DNA ligase that catalyzes the formation of phosphodiester linkages between 5'-phosphoryl and 3'-hydroxyl groups in double-stranded DNA using NAD as a coenzyme and as the energy source for the reaction. It is essential for DNA replication and repair of damaged DNA. The sequence is that of DNA ligase from Rickettsia bellii (strain OSU 85-389).